Here is a 249-residue protein sequence, read N- to C-terminus: tRNA (guanine-N(1)-)-methyltransferase (249 aa).

Residues G113 and 133-138 (IGDFVV) contribute to the S-adenosyl-L-methionine site.

Belongs to the RNA methyltransferase TrmD family. As to quaternary structure, homodimer.

Its subcellular location is the cytoplasm. The catalysed reaction is guanosine(37) in tRNA + S-adenosyl-L-methionine = N(1)-methylguanosine(37) in tRNA + S-adenosyl-L-homocysteine + H(+). Its function is as follows. Specifically methylates guanosine-37 in various tRNAs. This is tRNA (guanine-N(1)-)-methyltransferase from Neisseria meningitidis serogroup C (strain 053442).